Reading from the N-terminus, the 333-residue chain is Protoheme IX farnesyltransferase (333 aa).

A run of 7 helical transmembrane segments spans residues 64-84 (LICT…LNCL), 110-130 (TVFL…VSGV), 133-153 (LAAG…TVIL), 161-181 (IVFG…AATG), 189-209 (WLFG…AILL), 246-266 (IMGV…LLPF), and 287-307 (AKSL…LLLI).

The protein belongs to the UbiA prenyltransferase family. Protoheme IX farnesyltransferase subfamily.

It is found in the cell inner membrane. It carries out the reaction heme b + (2E,6E)-farnesyl diphosphate + H2O = Fe(II)-heme o + diphosphate. The protein operates within porphyrin-containing compound metabolism; heme O biosynthesis; heme O from protoheme: step 1/1. In terms of biological role, converts heme B (protoheme IX) to heme O by substitution of the vinyl group on carbon 2 of heme B porphyrin ring with a hydroxyethyl farnesyl side group. The protein is Protoheme IX farnesyltransferase of Prochlorococcus marinus (strain MIT 9215).